The sequence spans 92 residues: Exodeoxyribonuclease 7 small subunit (92 aa).

Positions 1–22 (MPKKNAISESTNSTPETAPAMT) are disordered. The span at 7–16 (ISESTNSTPE) shows a compositional bias: polar residues.

The protein belongs to the XseB family. Heterooligomer composed of large and small subunits.

It localises to the cytoplasm. The catalysed reaction is Exonucleolytic cleavage in either 5'- to 3'- or 3'- to 5'-direction to yield nucleoside 5'-phosphates.. Bidirectionally degrades single-stranded DNA into large acid-insoluble oligonucleotides, which are then degraded further into small acid-soluble oligonucleotides. The polypeptide is Exodeoxyribonuclease 7 small subunit (Photorhabdus laumondii subsp. laumondii (strain DSM 15139 / CIP 105565 / TT01) (Photorhabdus luminescens subsp. laumondii)).